Here is a 518-residue protein sequence, read N- to C-terminus: Protein nucleotidyltransferase YdiU (518 aa).

The segment covering 1–10 has biased composition (basic and acidic residues); it reads MTHLHFDNRL. A disordered region spans residues 1 to 25; it reads MTHLHFDNRLRQQLPGDPEEGARRR. ATP is bound by residues Gly100, Gly102, Arg103, Lys123, Asp135, Gly136, Arg193, and Arg200. Asp270 (proton acceptor) is an active-site residue. Mg(2+)-binding residues include Asn271 and Asp280. Asp280 contacts ATP.

Belongs to the SELO family. Mg(2+) serves as cofactor. Mn(2+) is required as a cofactor.

The catalysed reaction is L-seryl-[protein] + ATP = 3-O-(5'-adenylyl)-L-seryl-[protein] + diphosphate. It catalyses the reaction L-threonyl-[protein] + ATP = 3-O-(5'-adenylyl)-L-threonyl-[protein] + diphosphate. It carries out the reaction L-tyrosyl-[protein] + ATP = O-(5'-adenylyl)-L-tyrosyl-[protein] + diphosphate. The enzyme catalyses L-histidyl-[protein] + UTP = N(tele)-(5'-uridylyl)-L-histidyl-[protein] + diphosphate. The catalysed reaction is L-seryl-[protein] + UTP = O-(5'-uridylyl)-L-seryl-[protein] + diphosphate. It catalyses the reaction L-tyrosyl-[protein] + UTP = O-(5'-uridylyl)-L-tyrosyl-[protein] + diphosphate. In terms of biological role, nucleotidyltransferase involved in the post-translational modification of proteins. It can catalyze the addition of adenosine monophosphate (AMP) or uridine monophosphate (UMP) to a protein, resulting in modifications known as AMPylation and UMPylation. This is Protein nucleotidyltransferase YdiU from Xanthomonas euvesicatoria pv. vesicatoria (strain 85-10) (Xanthomonas campestris pv. vesicatoria).